Consider the following 393-residue polypeptide: Phospholipid-transporting ATPase accessory subunit CRF1 (393 aa).

Topologically, residues 1–46 (MGLILRWKEKKQLSSKQNAQKSRKPANTSFRQQRLKAWQPILSPQS) are cytoplasmic. The helical transmembrane segment at 47 to 67 (VLPLLILMACVFAPIGIGLVV) threads the bilayer. Topologically, residues 68 to 334 (STISVQRLVV…NSIIGAGNEA (267 aa)) are lumenal. The confers specificity for binding DNF3 stretch occupies residues 70–332 (ISVQRLVVNY…TTNSIIGAGN (263 aa)). N-linked (GlcNAc...) asparagine glycans are attached at residues N78, N123, N187, N202, N213, N240, and N291. 2 cysteine pairs are disulfide-bonded: C82/C126 and C179/C193. The helical transmembrane segment at 335 to 355 (LGIVYLIVAGIATLFAILFLI) threads the bilayer. Over 356 to 393 (KVIFKPRPMHDHSYLNFENSDTPFDESSVVSIPLREIL) the chain is Cytoplasmic.

It belongs to the CDC50/LEM3 family. Component of a flippase complex consisting of DNF3 and YNR048W/CRF1. Interacts with DNF3; the interaction is direct and required for proper expression and endoplasmic reticulum (ER) export of either partner.

The protein localises to the golgi apparatus. It localises to the trans-Golgi network membrane. Functionally, accessory component of a P4-ATPase flippase complex which catalyzes the hydrolysis of ATP coupled to the transport of phosphatidylcholine and small amounts of phosphatidylethanolamine from the lumen to the cytosolic leaflet of the trans-Golgi network and ensures the maintenance of asymmetric distribution of phospholipids. May be involved in transport from early endosomes to the trans-Golgi network (TGN). This chain is Phospholipid-transporting ATPase accessory subunit CRF1, found in Saccharomyces cerevisiae (strain ATCC 204508 / S288c) (Baker's yeast).